A 490-amino-acid polypeptide reads, in one-letter code: Glutamyl-tRNA(Gln) amidotransferase subunit A (490 aa).

Catalysis depends on charge relay system residues K76 and S151. The Acyl-ester intermediate role is filled by S175.

The protein belongs to the amidase family. GatA subfamily. In terms of assembly, heterotrimer of A, B and C subunits.

The enzyme catalyses L-glutamyl-tRNA(Gln) + L-glutamine + ATP + H2O = L-glutaminyl-tRNA(Gln) + L-glutamate + ADP + phosphate + H(+). Functionally, allows the formation of correctly charged Gln-tRNA(Gln) through the transamidation of misacylated Glu-tRNA(Gln) in organisms which lack glutaminyl-tRNA synthetase. The reaction takes place in the presence of glutamine and ATP through an activated gamma-phospho-Glu-tRNA(Gln). In Aromatoleum aromaticum (strain DSM 19018 / LMG 30748 / EbN1) (Azoarcus sp. (strain EbN1)), this protein is Glutamyl-tRNA(Gln) amidotransferase subunit A.